The sequence spans 432 residues: Sonic hedgehog protein (432 aa).

Residues 1-26 form the signal peptide; sequence MDEMILLRRVLLAGFICALLVPSGLS. Cysteine 27 carries the N-palmitoyl cysteine lipid modification. Positions 35–41 match the Cardin-Weintraub motif; the sequence is TRKRFKK. Positions 92, 93, 98, 128, 129, 132, and 134 each coordinate Ca(2+). Zn(2+)-binding residues include histidine 143, aspartate 150, and histidine 185. The Cholesterol glycine ester moiety is linked to residue glycine 200.

This sequence belongs to the hedgehog family. Interacts with HHATL/GUP1 which negatively regulates HHAT-mediated palmitoylation of the SHH N-terminus. Interacts with BOC and CDON. Interacts with HHIP. Interacts with DISP1 via its cholesterol anchor. Interacts with SCUBE2. In terms of assembly, multimer. In terms of processing, the C-terminal domain displays an autoproteolysis activity and a cholesterol transferase activity. Both activities result in the cleavage of the full-length protein and covalent attachment of a cholesterol moiety to the C-terminal of the newly generated N-terminal fragment (ShhN). Cholesterylation is required for the sonic hedgehog protein N-product targeting to lipid rafts and multimerization. ShhN is the active species in both local and long-range signaling, whereas the C-product (ShhC) is degraded in the reticulum endoplasmic. N-palmitoylation by HHAT of ShhN is required for sonic hedgehog protein N-product multimerization and full activity. It is a prerequisite for the membrane-proximal positioning and the subsequent shedding of this N-terminal peptide. Post-translationally, the lipidated N- and C-terminal peptides of ShhNp can be cleaved (shedding). The N-terminal palmitoylated peptide is cleaved at the Cardin-Weintraub (CW) motif site. The cleavage reduced the interactions with heparan sulfate. The cleavage is enhanced by SCUBE2.

The protein localises to the endoplasmic reticulum membrane. Its subcellular location is the golgi apparatus membrane. It is found in the cell membrane. The enzyme catalyses glycyl-L-cysteinyl-[protein] + cholesterol + H(+) = [protein]-C-terminal glycyl cholesterol ester + N-terminal L-cysteinyl-[protein]. In terms of biological role, the C-terminal part of the sonic hedgehog protein precursor displays an autoproteolysis and a cholesterol transferase activity. Both activities result in the cleavage of the full-length protein into two parts (ShhN and ShhC) followed by the covalent attachment of a cholesterol moiety to the C-terminal of the newly generated ShhN. Both activities occur in the endoplasmic reticulum. Once cleaved, ShhC is degraded in the endoplasmic reticulum. Its function is as follows. The dually lipidated sonic hedgehog protein N-product (ShhNp) is a morphogen which is essential for a variety of patterning events during development. Induces ventral cell fate in the neural tube and somites. Involved in the patterning of the anterior-posterior axis of the developing limb bud. Essential for axon guidance. Binds to the patched (PTCH1) receptor, which functions in association with smoothened (SMO), to activate the transcription of target genes. In the absence of SHH, PTCH1 represses the constitutive signaling activity of SMO. The sequence is that of Sonic hedgehog protein from Cynops pyrrhogaster (Japanese fire-bellied newt).